A 536-amino-acid chain; its full sequence is GPI alpha-1,2-mannosyltransferase 3 (536 aa).

Residue N15 is glycosylated (N-linked (GlcNAc...) asparagine). 2 helical membrane passes run 40 to 60 (IFGI…CVLV) and 118 to 138 (VYLL…YADV). A glycan (N-linked (GlcNAc...) asparagine) is linked at N176. Transmembrane regions (helical) follow at residues 206 to 226 (LVSL…PLIF), 243 to 263 (YFPI…FFYG), 297 to 317 (GLPV…LLST), 322 to 342 (ILLL…HKEF), 344 to 364 (FIYP…AKLQ), and 369 to 389 (AAAG…GLVH). N467 carries an N-linked (GlcNAc...) asparagine glycan.

Belongs to the glycosyltransferase 22 family. PIGB subfamily.

The protein resides in the endoplasmic reticulum membrane. It functions in the pathway glycolipid biosynthesis; glycosylphosphatidylinositol-anchor biosynthesis. Functionally, alpha-1,2-mannosyltransferase that catalyzes the transfer of the third mannose, via an alpha-1,2 bond, from a dolichol-phosphate-mannose (Dol-P-Man) to an alpha-D-Man-(1-&gt;6)-2-PEtn-alpha-D-Man-(1-&gt;4)-alpha-D-GlcN-(1-&gt;6)-(1-radyl,2-acyl-sn-glycero-3-phospho)-2-acyl-inositol intermediate to generate an alpha-D-Man-(1-&gt;2)-alpha-D-Man-(1-&gt;6)-2-PEtn-alpha-D-Man-(1-&gt;4)-alpha-D-GlcN-(1-&gt;6)-(1-radyl,2-acyl-sn-glycero-3-phospho)-2-acyl-inositol (also termed H6) and participates in the nineth step of the glycosylphosphatidylinositol-anchor biosynthesis. May also add the third mannose to an alpha-D-Man-(1-&gt;6)-alpha-D-Man-(1-&gt;4)-alpha-D-GlcN-(1-&gt;6)-(1-radyl,2-acyl-sn-glycero-3-phospho)-2-acyl-inositol (also termed H3) intermediate generating an alpha-D-Man-(1-&gt;2)-alpha-D-Man-(1-&gt;6)-alpha-D-Man-(1-&gt;4)-alpha-D-GlcN-(1-&gt;6)-(1-radyl,2-acyl-sn-glycero-3-phospho)-2-acyl-inositol (also termed H4). The chain is GPI alpha-1,2-mannosyltransferase 3 from Danio rerio (Zebrafish).